A 1201-amino-acid polypeptide reads, in one-letter code: uncharacterized protein (1201 aa).

A helical membrane pass occupies residues 140–160; sequence IIINLIFFFAFIIVGIYLFKP. Coiled-coil stretches lie at residues 420–459 and 536–574; these read QKKQLIIEEQIKLINAKIQQLERKLANIEVESLKSIAELN and AIKAIEKNEIQKFKKELLELEREKQEIRAQSLQVLITKM.

The protein localises to the cell membrane. This is an uncharacterized protein from Bacillus subtilis (strain 168).